The sequence spans 143 residues: Small ribosomal subunit protein uS11c (143 aa).

This sequence belongs to the universal ribosomal protein uS11 family. In terms of assembly, part of the 30S ribosomal subunit.

The protein localises to the plastid. It is found in the chloroplast. The protein is Small ribosomal subunit protein uS11c of Hordeum vulgare (Barley).